Here is a 221-residue protein sequence, read N- to C-terminus: Hypoxanthine-guanine phosphoribosyltransferase (221 aa).

Ser-2 carries the N-acetylserine modification. Residues Lys-85, Asp-110–Thr-118, Lys-159, and Trp-188–Glu-194 contribute to the GMP site. Catalysis depends on Asp-114, which acts as the Proton acceptor.

The protein belongs to the purine/pyrimidine phosphoribosyltransferase family. In terms of assembly, dimer. The cofactor is Mg(2+).

It is found in the cytoplasm. The protein localises to the nucleus. It carries out the reaction IMP + diphosphate = hypoxanthine + 5-phospho-alpha-D-ribose 1-diphosphate. The enzyme catalyses GMP + diphosphate = guanine + 5-phospho-alpha-D-ribose 1-diphosphate. It functions in the pathway purine metabolism; IMP biosynthesis via salvage pathway; IMP from hypoxanthine: step 1/1. With respect to regulation, subject to feedback inhibition by GMP. Its function is as follows. Converts guanine to guanosine monophosphate, and hypoxanthine to inosine monophosphate. Transfers the 5-phosphoribosyl group from 5-phosphoribosylpyrophosphate onto the purine. Plays a central role in the generation of purine nucleotides through the purine salvage pathway. In Saccharomyces cerevisiae (strain ATCC 204508 / S288c) (Baker's yeast), this protein is Hypoxanthine-guanine phosphoribosyltransferase (HPT1).